We begin with the raw amino-acid sequence, 384 residues long: Probable intron-encoded endonuclease Cox1-I1b (384 aa).

Belongs to the LAGLIDADG endonuclease family.

It localises to the mitochondrion. Functionally, probable mitochondrial DNA endonuclease involved in intron homing. The protein is Probable intron-encoded endonuclease Cox1-I1b (cox1-I1b) of Schizosaccharomyces pombe (strain 972 / ATCC 24843) (Fission yeast).